A 471-amino-acid chain; its full sequence is Putative multidrug resistance protein MdtD (471 aa).

Residues 1-12 lie on the Periplasmic side of the membrane; it reads MTDLPDSTRWQL. A helical membrane pass occupies residues 13–33; the sequence is WIVAFGFFMQSLDTTIVNTAI. Residues 34-48 lie on the Cytoplasmic side of the membrane; the sequence is PSMAQSLGESPLHMH. Residues 49–69 form a helical membrane-spanning segment; sequence MVIVSYVLTVAVMLPASGWLA. Residues 70-76 are Periplasmic-facing; it reads DKVGVRN. A helical membrane pass occupies residues 77–97; the sequence is IFFTAIVLFTLGSLFCALSGT. Over 98–101 the chain is Cytoplasmic; sequence LNEL. The chain crosses the membrane as a helical span at residues 102 to 124; the sequence is LLARALQGVGGAMMVPVGRLTVM. Residues 125 to 137 are Periplasmic-facing; that stretch reads KIVPREQYMAAMT. Residues 138 to 158 traverse the membrane as a helical segment; it reads FVTLPGQVGPLLGPALGGLLV. Topologically, residues 159–164 are cytoplasmic; it reads EYASWH. Residues 165-185 traverse the membrane as a helical segment; sequence WIFLINIPVGIIGAIATLMLM. Topologically, residues 186 to 196 are periplasmic; sequence PNYTMQTRRFD. The helical transmembrane segment at 197–217 threads the bilayer; that stretch reads LSGFLLLAVGMAVLTLALDGS. The Cytoplasmic segment spans residues 218 to 224; the sequence is KGTGLSP. The chain crosses the membrane as a helical span at residues 225–245; the sequence is LAIAGLVAVGVVALVLYLLHA. Topologically, residues 246-262 are periplasmic; the sequence is RNNNRALFSLKLFRTRT. Residues 263–283 form a helical membrane-spanning segment; that stretch reads FSLGLAGSFAGRIGSGMLPFM. Residues 284–285 lie on the Cytoplasmic side of the membrane; it reads TP. The helical transmembrane segment at 286–306 threads the bilayer; the sequence is VFLQIGLGFSPFHAGLMMIPM. At 307 to 341 the chain is on the periplasmic side; the sequence is VLGSMGMKRIVVQVVNRFGYRRVLVATTLGLSLVT. Residues 342–362 traverse the membrane as a helical segment; sequence LLFMTTALLGWYYVLPFVLFL. At 363–395 the chain is on the cytoplasmic side; it reads QGMVNSTRFSSMNTLTLKDLPDNLASSGNSLLS. The chain crosses the membrane as a helical span at residues 396-416; sequence MIMQLSMSIGVTIAGLLLGLF. The Periplasmic segment spans residues 417 to 430; it reads GSQHVSVDSGTTQT. The helical transmembrane segment at 431–451 threads the bilayer; it reads VFMYTWLSMAFIIALPAFIFA. Residues 452-471 are Cytoplasmic-facing; sequence RVPNDTHQNVAISRRKRSAQ.

It belongs to the major facilitator superfamily. TCR/Tet family.

It is found in the cell inner membrane. The chain is Putative multidrug resistance protein MdtD from Shigella flexneri serotype 5b (strain 8401).